We begin with the raw amino-acid sequence, 570 residues long: Aspartyl aminopeptidase (570 aa).

Position 86 (His-86) interacts with Zn(2+). His-160 serves as a coordination point for substrate. Asp-324 contacts Zn(2+). Substrate is bound at residue Glu-379. Zn(2+) contacts are provided by Glu-380 and Asp-434. Residues Asp-434, His-437, Lys-462, and Tyr-469 each contribute to the substrate site. Residue His-534 coordinates Zn(2+).

Belongs to the peptidase M18 family. As to quaternary structure, homododecamer composed of homodimers and homotrimers that assemble into a tetrahedron shape to create a central tunnel containing the active sites. Homooctamer. Zn(2+) is required as a cofactor.

It localises to the cytoplasm. The enzyme catalyses Release of an N-terminal aspartate or glutamate from a peptide, with a preference for aspartate.. With respect to regulation, activated by Co(2+). Inhibited by high concentrations (&gt;1mM) of Zn(2+). Aminopeptidase which specifically catalyzes the removal of glutamic acid or aspartic acid residues from the N-terminus of peptides. May play a role in the final step of host hemoglobin catabolism, by cleaving hemoglobin-derived oligopeptides in the cytoplasm. This chain is Aspartyl aminopeptidase, found in Plasmodium falciparum (isolate 3D7).